A 573-amino-acid chain; its full sequence is Poly(ribitol-phosphate) beta-N-acetylglucosaminyltransferase TarS (573 aa).

UDP-N-acetyl-alpha-D-glucosamine-binding positions include Pro9, Asp41, Asn68, Arg76, 92–94 (DSD), Arg127, and Glu178. Asp94 is a Mn(2+) binding site. Residue Asp179 is the Proton acceptor of the active site. Residues Arg207 and 211 to 213 (HMS) each bind UDP-N-acetyl-alpha-D-glucosamine.

This sequence belongs to the glycosyltransferase 2 family. Homotrimer. Mn(2+) serves as cofactor.

The enzyme catalyses 4-O-[(D-ribitylphospho)(n)-di{(2R)-glycerylphospho}]-N-acetyl-beta-D-mannosaminyl-(1-&gt;4)-N-acetyl-alpha-D-glucosaminyl di-trans,octa-cis-undecaprenyl diphosphate + n UDP-N-acetyl-alpha-D-glucosamine = 4-O-([2-N-acetyl-beta-D-glucosaminyl-1-D-ribitylphospho](n)-di{[2R]-1-glycerylphospho})-N-acetyl-beta-D-mannosaminyl-(1-&gt;4)-N-acetyl-alpha-D-glucosaminyl di-trans,octa-cis-undecaprenyl diphosphate + n UDP + n H(+). It participates in cell wall biogenesis; poly(ribitol phosphate) teichoic acid biosynthesis. In terms of biological role, attaches beta-O-GlcNAc (beta-O-N-acetyl-D-glucosamine) residues to the C4 position of poly(RboP)-wall teichoic acids (WTAs). Prefers UDP-GlcNAc as a donor substrate and is specific for poly(ribitol phosphate) WTAs. Can also use UDP-Glc and UDP-GalNAc, but not UDP-galactose or UDP-glucuronic acid. Mediates beta-lactam resistance in methicillin resistant Staphylococcus aureus (MRSA) strains. In Staphylococcus aureus (strain MW2), this protein is Poly(ribitol-phosphate) beta-N-acetylglucosaminyltransferase TarS.